A 549-amino-acid chain; its full sequence is Cytoplasmic trehalase (549 aa).

Substrate-binding positions include R168, 175-176, N212, 221-223, 292-294, and G324; these read WD, RSQ, and RDE. Catalysis depends on proton donor/acceptor residues D326 and E509. A substrate-binding site is contributed by E525.

It belongs to the glycosyl hydrolase 37 family. As to quaternary structure, monomer.

It localises to the cytoplasm. It carries out the reaction alpha,alpha-trehalose + H2O = alpha-D-glucose + beta-D-glucose. It participates in glycan degradation; trehalose degradation; D-glucose from alpha,alpha-trehalose: step 1/1. Functionally, hydrolyzes trehalose to glucose. Could be involved, in cells returning to low osmolarity conditions, in the utilization of the accumulated cytoplasmic trehalose, which was synthesized in response to high osmolarity. This chain is Cytoplasmic trehalase, found in Escherichia fergusonii (strain ATCC 35469 / DSM 13698 / CCUG 18766 / IAM 14443 / JCM 21226 / LMG 7866 / NBRC 102419 / NCTC 12128 / CDC 0568-73).